Here is a 118-residue protein sequence, read N- to C-terminus: Large ribosomal subunit protein uL23c (118 aa).

This sequence belongs to the universal ribosomal protein uL23 family. In terms of assembly, part of the 50S ribosomal subunit.

The protein localises to the plastid. It is found in the chloroplast. In terms of biological role, binds to 23S rRNA. The polypeptide is Large ribosomal subunit protein uL23c (rpl23) (Stigeoclonium helveticum (Green alga)).